Consider the following 132-residue polypeptide: Subtelomeric hrmA-associated cluster protein AFUB_079000 (132 aa).

In terms of biological role, part of the subtelomeric hrmA-associated cluster (HAC) containing genes that alter the hyphal surface (such as reduced total chitin or increased beta-glucan exposure) and perturb inter-hyphal interactions within the developing biofilms, resulting in a loss of vertically aligned polarized growing filaments. Consequently, this hypoxia-typic morphotype (called H-MORPH) with altered biofilm architecture leads to increased hypoxia fitness, increased host inflammation, rapid disease progression, and mortality in a murine model of invasive aspergillosis. This is Subtelomeric hrmA-associated cluster protein AFUB_079000 from Aspergillus fumigatus (strain CBS 144.89 / FGSC A1163 / CEA10) (Neosartorya fumigata).